Here is a 140-residue protein sequence, read N- to C-terminus: Large-conductance mechanosensitive channel (140 aa).

Transmembrane regions (helical) follow at residues 9–29 and 86–106; these read AFAL…GAAF and GSFL…FLMV.

It belongs to the MscL family. Homopentamer.

It localises to the cell inner membrane. Functionally, channel that opens in response to stretch forces in the membrane lipid bilayer. May participate in the regulation of osmotic pressure changes within the cell. The chain is Large-conductance mechanosensitive channel from Anaeromyxobacter dehalogenans (strain 2CP-1 / ATCC BAA-258).